A 105-amino-acid polypeptide reads, in one-letter code: Cell division topological specificity factor (105 aa).

This sequence belongs to the MinE family.

Its function is as follows. Prevents the cell division inhibition by proteins MinC and MinD at internal division sites while permitting inhibition at polar sites. This ensures cell division at the proper site by restricting the formation of a division septum at the midpoint of the long axis of the cell. This is Cell division topological specificity factor from Prochlorococcus marinus (strain MIT 9515).